The following is a 104-amino-acid chain: Thioredoxin-2 (104 aa).

Residues 2–104 (VTQLKSASEY…AIKQAIASNV (103 aa)) form the Thioredoxin domain. Residues C31 and C34 each act as nucleophile in the active site. Residues C31 and C34 are joined by a disulfide bond. S62 is subject to Phosphoserine. Residues K67 and K97 each participate in a glycyl lysine isopeptide (Lys-Gly) (interchain with G-Cter in ubiquitin) cross-link.

Belongs to the thioredoxin family. Monomer. Part of the heterodimeric LMA1 complex together with the proteinase inhibitor PBI2. LMA1 binds to the ATPase SEC18. In terms of processing, reversible disulfide bond formation between Cys-31 and Cys-34, reverted by thioredoxin reductase TRR1 using NADPH as hydrogen donor.

The protein localises to the cytoplasm. The protein resides in the golgi apparatus membrane. It localises to the nucleus. Its function is as follows. Participates as a hydrogen donor in redox reactions through the reversible oxidation of its active center dithiol to a disulfide, accompanied by the transfer of 2 electrons and 2 protons. It is involved in many cellular processes, including deoxyribonucleotide synthesis, repair of oxidatively damaged proteins, protein folding, sulfur metabolism, and redox homeostasis. Thioredoxin-dependent enzymes include phosphoadenosine-phosphosulfate reductase MET16, alkyl-hydroperoxide reductase DOT5, thioredoxin peroxidases TSA1 and TSA2, alkyl hydroperoxide reductase AHP1, and peroxiredoxin HYR1. Thioredoxin is also involved in protection against reducing stress. As part of the LMA1 complex, it is involved in the facilitation of vesicle fusion such as homotypic vacuole and ER-derived COPII vesicle fusion with the Golgi. This activity does not require the redox mechanism. Through its capacity to inactivate the stress response transcription factor YAP1 and its regulator the hydroperoxide stress sensor HYR1, it is involved in feedback regulation of stress response gene expression upon oxidative stress. The polypeptide is Thioredoxin-2 (TRX2) (Saccharomyces cerevisiae (strain ATCC 204508 / S288c) (Baker's yeast)).